Consider the following 310-residue polypeptide: Homoserine kinase (310 aa).

91-101 (PIGSGLGSSAC) provides a ligand contact to ATP.

Belongs to the GHMP kinase family. Homoserine kinase subfamily.

It localises to the cytoplasm. It catalyses the reaction L-homoserine + ATP = O-phospho-L-homoserine + ADP + H(+). It functions in the pathway amino-acid biosynthesis; L-threonine biosynthesis; L-threonine from L-aspartate: step 4/5. Catalyzes the ATP-dependent phosphorylation of L-homoserine to L-homoserine phosphate. The sequence is that of Homoserine kinase from Escherichia coli O81 (strain ED1a).